Here is a 605-residue protein sequence, read N- to C-terminus: Zinc metalloproteinase-disintegrin-like BfMP (605 aa).

Residues 1–11 (MLVVFPYQGSS) form the signal peptide. Residues 12 to 179 (IILESGNVND…WESDEPFKNT (168 aa)) constitute a propeptide that is removed on maturation. Asn-178 and Asn-215 each carry an N-linked (GlcNAc...) asparagine glycan. The 197-residue stretch at 196-392 (KYIEFYVAVD…DRPQCILNKP (197 aa)) folds into the Peptidase M12B domain. 17 disulfide bridges follow: Cys-307/Cys-387, Cys-347/Cys-371, Cys-350/Cys-355, Cys-403/Cys-432, Cys-414/Cys-427, Cys-416/Cys-422, Cys-426/Cys-449, Cys-440/Cys-446, Cys-445/Cys-471, Cys-458/Cys-478, Cys-465/Cys-497, Cys-490/Cys-502, Cys-509/Cys-559, Cys-524/Cys-567, Cys-537/Cys-547, Cys-554/Cys-593, and Cys-587/Cys-598. His-332 contacts Zn(2+). Glu-333 is an active-site residue. 2 residues coordinate Zn(2+): His-336 and His-342. The region spanning 400-486 (PAICGNYFVE…ECPTDIFRRN (87 aa)) is the Disintegrin domain. The D/ECD-tripeptide motif lies at 464 to 466 (DCD).

Belongs to the venom metalloproteinase (M12B) family. P-III subfamily. P-IIIa sub-subfamily. As to quaternary structure, monomer. Zn(2+) serves as cofactor. As to expression, expressed by the venom gland.

The protein resides in the secreted. In terms of biological role, snake venom zinc metalloproteinase that inhibits platelet aggregation and degrades fibrinogen. This is Zinc metalloproteinase-disintegrin-like BfMP from Bungarus fasciatus (Banded krait).